We begin with the raw amino-acid sequence, 582 residues long: Proline--tRNA ligase (582 aa).

This sequence belongs to the class-II aminoacyl-tRNA synthetase family. ProS type 1 subfamily. In terms of assembly, homodimer.

Its subcellular location is the cytoplasm. It catalyses the reaction tRNA(Pro) + L-proline + ATP = L-prolyl-tRNA(Pro) + AMP + diphosphate. In terms of biological role, catalyzes the attachment of proline to tRNA(Pro) in a two-step reaction: proline is first activated by ATP to form Pro-AMP and then transferred to the acceptor end of tRNA(Pro). As ProRS can inadvertently accommodate and process non-cognate amino acids such as alanine and cysteine, to avoid such errors it has two additional distinct editing activities against alanine. One activity is designated as 'pretransfer' editing and involves the tRNA(Pro)-independent hydrolysis of activated Ala-AMP. The other activity is designated 'posttransfer' editing and involves deacylation of mischarged Ala-tRNA(Pro). The misacylated Cys-tRNA(Pro) is not edited by ProRS. The chain is Proline--tRNA ligase from Mycobacterium ulcerans (strain Agy99).